Here is a 276-residue protein sequence, read N- to C-terminus: Diaminopimelate epimerase (276 aa).

Positions 13, 46, and 66 each coordinate substrate. Catalysis depends on C75, which acts as the Proton donor. Substrate-binding positions include 76 to 77 (GN), N159, N192, and 210 to 211 (ER). C219 serves as the catalytic Proton acceptor. Residue 220-221 (GT) participates in substrate binding.

This sequence belongs to the diaminopimelate epimerase family. As to quaternary structure, homodimer.

The protein resides in the cytoplasm. The catalysed reaction is (2S,6S)-2,6-diaminopimelate = meso-2,6-diaminopimelate. The protein operates within amino-acid biosynthesis; L-lysine biosynthesis via DAP pathway; DL-2,6-diaminopimelate from LL-2,6-diaminopimelate: step 1/1. Functionally, catalyzes the stereoinversion of LL-2,6-diaminopimelate (L,L-DAP) to meso-diaminopimelate (meso-DAP), a precursor of L-lysine and an essential component of the bacterial peptidoglycan. In Pseudomonas aeruginosa (strain UCBPP-PA14), this protein is Diaminopimelate epimerase.